We begin with the raw amino-acid sequence, 84 residues long: Small ribosomal subunit protein bS18B (84 aa).

A compositionally biased stretch (basic residues) spans 1–10; that stretch reads MAVKRAPSKK. The segment at 1 to 20 is disordered; the sequence is MAVKRAPSKKVRAEQARRPK.

Belongs to the bacterial ribosomal protein bS18 family. In terms of assembly, part of the 30S ribosomal subunit. Forms a tight heterodimer with protein bS6.

Functionally, binds as a heterodimer with protein bS6 to the central domain of the 16S rRNA, where it helps stabilize the platform of the 30S subunit. The chain is Small ribosomal subunit protein bS18B from Nocardia farcinica (strain IFM 10152).